The following is a 104-amino-acid chain: L-rhamnose mutarotase (104 aa).

Y18 contributes to the substrate binding site. The active-site Proton donor is H22. Residues Y41 and W76 to W77 contribute to the substrate site.

This sequence belongs to the rhamnose mutarotase family. Homodimer.

It localises to the cytoplasm. It carries out the reaction alpha-L-rhamnose = beta-L-rhamnose. It participates in carbohydrate metabolism; L-rhamnose metabolism. Functionally, involved in the anomeric conversion of L-rhamnose. The polypeptide is L-rhamnose mutarotase (Shigella flexneri serotype 5b (strain 8401)).